The sequence spans 196 residues: MSNQIKLLVGLANPGLEYKRTRHNAGAWVVEELARVHNVSMREESKFFGLTGRIQSNGDDLRLLIPTTFMNLSGKGIAAMAKFYQIKPEEILVAHDELDLPPGVAKFKKGGGHGGHNGLRDTISKLANTKEFYRLRIGIGHPGHKDKVAGFVLGKAPTKEQELIDAAVDESTRCLDILLKDGLSKAQNRLHTFKAE.

Residue Y18 coordinates tRNA. H23 functions as the Proton acceptor in the catalytic mechanism. TRNA is bound by residues F69, N71, and N117.

It belongs to the PTH family. In terms of assembly, monomer.

It localises to the cytoplasm. It carries out the reaction an N-acyl-L-alpha-aminoacyl-tRNA + H2O = an N-acyl-L-amino acid + a tRNA + H(+). Functionally, hydrolyzes ribosome-free peptidyl-tRNAs (with 1 or more amino acids incorporated), which drop off the ribosome during protein synthesis, or as a result of ribosome stalling. Catalyzes the release of premature peptidyl moieties from peptidyl-tRNA molecules trapped in stalled 50S ribosomal subunits, and thus maintains levels of free tRNAs and 50S ribosomes. The polypeptide is Peptidyl-tRNA hydrolase (Aliivibrio fischeri (strain MJ11) (Vibrio fischeri)).